A 417-amino-acid chain; its full sequence is NADH-quinone oxidoreductase subunit D (417 aa).

This sequence belongs to the complex I 49 kDa subunit family. In terms of assembly, NDH-1 is composed of 14 different subunits. Subunits NuoB, C, D, E, F, and G constitute the peripheral sector of the complex.

It localises to the cell inner membrane. The enzyme catalyses a quinone + NADH + 5 H(+)(in) = a quinol + NAD(+) + 4 H(+)(out). Its function is as follows. NDH-1 shuttles electrons from NADH, via FMN and iron-sulfur (Fe-S) centers, to quinones in the respiratory chain. The immediate electron acceptor for the enzyme in this species is believed to be ubiquinone. Couples the redox reaction to proton translocation (for every two electrons transferred, four hydrogen ions are translocated across the cytoplasmic membrane), and thus conserves the redox energy in a proton gradient. This Polynucleobacter necessarius subsp. necessarius (strain STIR1) protein is NADH-quinone oxidoreductase subunit D.